The chain runs to 149 residues: MQVILLDKVAHLGSVGDQVTVKSGFARNFLIPQGKAVMATAANIAHFEARRAELEAKAAEALAAAQARAAKIAEIAAVSVSATAGDDGRLFGSISAKDIADALTAAGVAVAKSEVRLGEGPLRTTGEHEVKVHLHPEVNAAVTVNVVAE.

Belongs to the bacterial ribosomal protein bL9 family.

Functionally, binds to the 23S rRNA. This chain is Large ribosomal subunit protein bL9, found in Actinobacillus pleuropneumoniae serotype 3 (strain JL03).